Reading from the N-terminus, the 766-residue chain is Tetratricopeptide repeat protein 14 (766 aa).

Positions 35 to 55 (LGTAAEPARGAAPPPGAGRKE) are disordered. Residues 125-207 (GDIVIGRISS…YHEKLAVSLY (83 aa)) enclose the S1 motif domain. TPR repeat units lie at residues 209-242 (SSLP…NSNS), 306-339 (ALKC…DKQN), 341-373 (EALV…CPTH), and 381-414 (CQTL…DETF). Residues 463 to 743 (EEKRLKKKRR…PDSRVKKNLP (281 aa)) form a disordered region. Residues 475–496 (SSSSSVSSADESVSSSSSSSSS) are compositionally biased toward low complexity. Residues 497–506 (SHKRHKKSKR) show a composition bias toward basic residues. Residues 539–550 (PTNTSASFLNQK) are compositionally biased toward polar residues. A compositionally biased stretch (basic and acidic residues) spans 551–562 (QEVEKLLEKQDR). Residues 594–605 (FYNSYKTQAGSS) show a composition bias toward polar residues. 2 stretches are compositionally biased toward basic and acidic residues: residues 606-616 (KTEKPYKSERH) and 629-657 (NSED…RRWE). The span at 661–673 (VKYSTSPASSDYS) shows a compositional bias: polar residues. A Phosphoserine modification is found at S666. The span at 707 to 738 (RVYEKEDSCGEGNRNEAPEEMLNSKEQPDSRV) shows a compositional bias: basic and acidic residues.

The protein belongs to the TTC14 family.

The polypeptide is Tetratricopeptide repeat protein 14 (Mus musculus (Mouse)).